Consider the following 293-residue polypeptide: Nucleotide-binding protein cauri_1197 (293 aa).

16–23 lines the ATP pocket; that stretch reads GMSGGGLT. 67-70 contributes to the GTP binding site; sequence DVRS.

This sequence belongs to the RapZ-like family.

Displays ATPase and GTPase activities. The protein is Nucleotide-binding protein cauri_1197 of Corynebacterium aurimucosum (strain ATCC 700975 / DSM 44827 / CIP 107346 / CN-1) (Corynebacterium nigricans).